Here is a 236-residue protein sequence, read N- to C-terminus: Ubiquinone biosynthesis O-methyltransferase (236 aa).

Arg-36, Gly-56, Asp-77, and Met-125 together coordinate S-adenosyl-L-methionine.

This sequence belongs to the methyltransferase superfamily. UbiG/COQ3 family.

It carries out the reaction a 3-demethylubiquinol + S-adenosyl-L-methionine = a ubiquinol + S-adenosyl-L-homocysteine + H(+). The enzyme catalyses a 3-(all-trans-polyprenyl)benzene-1,2-diol + S-adenosyl-L-methionine = a 2-methoxy-6-(all-trans-polyprenyl)phenol + S-adenosyl-L-homocysteine + H(+). It participates in cofactor biosynthesis; ubiquinone biosynthesis. Functionally, O-methyltransferase that catalyzes the 2 O-methylation steps in the ubiquinone biosynthetic pathway. This is Ubiquinone biosynthesis O-methyltransferase from Glaesserella parasuis serovar 5 (strain SH0165) (Haemophilus parasuis).